The sequence spans 603 residues: NADH-ubiquinone oxidoreductase chain 5 (603 aa).

15 consecutive transmembrane segments (helical) span residues serine 38–aspartate 58, methionine 87–tyrosine 107, leucine 122–isoleucine 142, tryptophan 144–alanine 160, alanine 171–leucine 191, threonine 211–leucine 233, threonine 241–isoleucine 261, leucine 272–alanine 292, isoleucine 301–asparagine 320, alanine 325–isoleucine 347, serine 370–tyrosine 390, tryptophan 407–leucine 429, alanine 458–phenylalanine 478, isoleucine 482–leucine 502, and glycine 582–isoleucine 602.

The protein belongs to the complex I subunit 5 family. As to quaternary structure, core subunit of respiratory chain NADH dehydrogenase (Complex I) which is composed of 45 different subunits.

The protein resides in the mitochondrion inner membrane. The enzyme catalyses a ubiquinone + NADH + 5 H(+)(in) = a ubiquinol + NAD(+) + 4 H(+)(out). Core subunit of the mitochondrial membrane respiratory chain NADH dehydrogenase (Complex I) which catalyzes electron transfer from NADH through the respiratory chain, using ubiquinone as an electron acceptor. Essential for the catalytic activity and assembly of complex I. This chain is NADH-ubiquinone oxidoreductase chain 5 (MT-ND5), found in Homo sapiens (Human).